Consider the following 462-residue polypeptide: Asparagine--tRNA ligase (462 aa).

Belongs to the class-II aminoacyl-tRNA synthetase family. In terms of assembly, homodimer.

Its subcellular location is the cytoplasm. The enzyme catalyses tRNA(Asn) + L-asparagine + ATP = L-asparaginyl-tRNA(Asn) + AMP + diphosphate + H(+). This Borreliella burgdorferi (strain ATCC 35210 / DSM 4680 / CIP 102532 / B31) (Borrelia burgdorferi) protein is Asparagine--tRNA ligase.